We begin with the raw amino-acid sequence, 374 residues long: MDLKDGGGSERRGAAAGAGAGAAPLARQGSIYSLTFDEFQSTLGGMGGGLGKDFGSMNMDELLRSIWTAEESQAMASASAAAAAAEGGLQRQGSLTLPRTLSVKTVDEVWRDLEREASPGAAAADGGGGGGEQQQPRRQPTLGEMTLEEFLVRAGVVRENTAAAAAMVAAAAAPPVAPRSIPAVNNSSIFFGNYGGVNDAAAAAAGAMGFSPVGIGDPTMGNRLMSGVAGIGGGAITVAPVDTSVGQMDSAGKGDGDLSSPMAPVPYPFEGVIRGRRSGGNVEKVVERRQRRMIKNRESAARSRARKQAYTMELEAEVQKLKEQNMELQKKQEEIMEMQKNFFPEMQKNQVLEAVNNPYGQKKRCLRRTLTGPW.

Positions 1–13 (MDLKDGGGSERRG) are enriched in basic and acidic residues. 2 disordered regions span residues 1 to 23 (MDLK…AGAA) and 117 to 142 (ASPG…QPTL). Positions 14–23 (AAAGAGAGAA) are enriched in low complexity. Residues 286 to 349 (VERRQRRMIK…KNFFPEMQKN (64 aa)) form the bZIP domain. The tract at residues 288–307 (RRQRRMIKNRESAARSRARK) is basic motif. The interval 314–335 (LEAEVQKLKEQNMELQKKQEEI) is leucine-zipper.

This sequence belongs to the bZIP family. In terms of assembly, interacts with VP1 (via N-terminus). In terms of tissue distribution, expressed in roots, leaves and embryos.

Its subcellular location is the nucleus. In terms of biological role, transcription activator that mediates abscisic acid (ABA) signaling. Binds specifically to the ABA-responsive element (ABRE) of the EMP1 and RAB16A gene promoters. The sequence is that of bZIP transcription factor TRAB1 from Oryza sativa subsp. japonica (Rice).